We begin with the raw amino-acid sequence, 1659 residues long: Vitellogenin (1659 aa).

Positions 1–15 are cleaved as a signal peptide; that stretch reads MRAVVLALTLALVAS. A Vitellogenin domain is found at 24 to 662; it reads FAASKTYVYK…DAATLFPRTV (639 aa). The N-linked (GlcNAc...) asparagine glycan is linked to N1089. Composition is skewed to low complexity over residues 1090–1111 and 1119–1129; these read GTRA…SSSR and SSSSSSSSSSR. Residues 1090-1163 are disordered; that stretch reads GTRASSSSSS…SQSTSNVISR (74 aa). The region spanning 1389 to 1565 is the VWFD domain; that stretch reads VKCSMVRDTL…SWVLPSDSCR (177 aa). Intrachain disulfides connect C1391–C1528 and C1414–C1564. Residue N1627 is glycosylated (N-linked (GlcNAc...) asparagine).

Post-translationally, phosvitin, an egg yolk storage protein, is one of the most highly phosphorylated (10%) proteins in nature. In terms of tissue distribution, produced by the liver, secreted into the blood and then sequestered by receptor mediated endocytosis into growing oocytes, where it is generally cleaved, giving rise to the respective yolk components lipovitellin-I, phosvitin, lipovitellin-II.

In terms of biological role, precursor of the major egg-yolk proteins that are sources of nutrients during early development of oviparous organisms. The sequence is that of Vitellogenin (vtg1) from Oncorhynchus mykiss (Rainbow trout).